Consider the following 156-residue polypeptide: Transcriptional repressor NrdR (156 aa).

A zinc finger lies at 3-34; that stretch reads CPKCNSTHSRVVDSRHADEANAIRRRRECENC. An ATP-cone domain is found at 49 to 139; the sequence is LIVVKKDGTR…VYKEFKDVDQ (91 aa).

This sequence belongs to the NrdR family. Requires Zn(2+) as cofactor.

Negatively regulates transcription of bacterial ribonucleotide reductase nrd genes and operons by binding to NrdR-boxes. This is Transcriptional repressor NrdR from Staphylococcus epidermidis (strain ATCC 35984 / DSM 28319 / BCRC 17069 / CCUG 31568 / BM 3577 / RP62A).